The sequence spans 181 residues: Swi1-interacting protein swi3 (181 aa).

The segment at 1–47 (MSTAASDSGVEKLVEENKREEVKKNEEEKEFDLGLEENPDSVKKPRK) is disordered. Residues 9–27 (GVEKLVEENKREEVKKNEE) are compositionally biased toward basic and acidic residues. Acidic residues predominate over residues 28 to 39 (EKEFDLGLEENP).

Belongs to the CSM3 family. Fork protection complex (FPC) consisting of swi1 and swi3 interacts with mat1 cis-acting sequences and mat1-proximal polar-terminator of replication (RTS1).

The protein resides in the nucleus. Forms a fork protection complex (FPC) with swi1. FPC coordinates leading and lagging strand synthesis and moves with the replication fork. It is required for programmed fork-pausing which is necessary for mating-type switching. FPC stabilizes replication forks in a configuration that is recognized by replication checkpoint sensors. It is involved in termination at the mat1-proximal polar-terminator of replication (RTS1) and also required for activation of the Rad53-like checkpoint kinase cds1. In Schizosaccharomyces pombe (strain 972 / ATCC 24843) (Fission yeast), this protein is Swi1-interacting protein swi3 (swi3).